Here is a 643-residue protein sequence, read N- to C-terminus: Probable potassium transport system protein Kup 2 (643 aa).

The disordered stretch occupies residues 1-20 (MSSHVPSFLRGTPDMTAHGG). Transmembrane regions (helical) follow at residues 27–47 (VAGLMLAAIGVVFGDIGTSPL), 70–90 (VLSLVFWAITIIVSFKYVIII), 120–140 (LMVSALGIFAAALFYGDSIIT), 157–177 (PHLEQWVVPLTIVILFVLFAI), 185–205 (VGKMFGPVMLVWFLTLAILGI), 231–251 (GWHAFLALGSVVLAVTGAEAL), 267–287 (WYLLVLPALILNYFGQGALLI), 300–320 (LAPASLALPLVILATLATVIA), 357–377 (IYLPFVNWLLMCMVMVLVVGF), 389–409 (VAVTGTMVIDALLVGTVMLLI), 419–439 (WLIGGFLVVDLAFFLANSIKI), and 440–460 (PDGGWFPLVVGGLLFTILTTW).

It belongs to the HAK/KUP transporter (TC 2.A.72) family.

It is found in the cell inner membrane. It catalyses the reaction K(+)(in) + H(+)(in) = K(+)(out) + H(+)(out). Functionally, transport of potassium into the cell. Likely operates as a K(+):H(+) symporter. The protein is Probable potassium transport system protein Kup 2 of Paramagnetospirillum magneticum (strain ATCC 700264 / AMB-1) (Magnetospirillum magneticum).